A 328-amino-acid polypeptide reads, in one-letter code: MNLMRTAMLLAFMTALFMGVGYLIGGQSGMMIAFVAAAGMNFFSYWNSDRMVLSTYGAQEVDERSAPEFYGIVRDLARNAGLPMPKVYLYDNPQPNAFATGRNPQNAAVAASTGLLHALTPQEVAGVMAHELAHVQNRDTLTMTITATLAGAISMLGNFAFFFGGRRDNNNPLGAIGVLAAMIVAPLAAMLVQMAISRTREYSADRRGAEICGNPLWLASALGKIARGAAHIPNEEAEGHPATAHMFIINPLSGARMDNLFSTHPDTENRIAALHEMAQYGGGTGPSVGTPTRSGSTGPAMTANPERKSRSVPNTGRGGSQPPKGPWS.

2 helical membrane passes run 6–26 (TAML…LIGG) and 28–48 (SGMM…YWNS). His130 is a binding site for Zn(2+). Residue Glu131 is part of the active site. His134 is a Zn(2+) binding site. 2 helical membrane passes run 145-165 (ITAT…FFGG) and 172-192 (PLGA…AMLV). Glu201 lines the Zn(2+) pocket. Positions 279 to 328 (QYGGGTGPSVGTPTRSGSTGPAMTANPERKSRSVPNTGRGGSQPPKGPWS) are disordered. Low complexity predominate over residues 287–299 (SVGTPTRSGSTGP).

The protein belongs to the peptidase M48B family. Requires Zn(2+) as cofactor.

The protein resides in the cell inner membrane. The polypeptide is Protease HtpX homolog (Rhizobium rhizogenes (strain K84 / ATCC BAA-868) (Agrobacterium radiobacter)).